A 90-amino-acid polypeptide reads, in one-letter code: Acylphosphatase (90 aa).

One can recognise an Acylphosphatase-like domain in the interval Lys3–His90. Active-site residues include Arg18 and Asn36.

This sequence belongs to the acylphosphatase family.

It carries out the reaction an acyl phosphate + H2O = a carboxylate + phosphate + H(+). This is Acylphosphatase (acyP) from Mannheimia succiniciproducens (strain KCTC 0769BP / MBEL55E).